Consider the following 318-residue polypeptide: Cytochrome c biogenesis protein CcsA (318 aa).

The next 8 membrane-spanning stretches (helical) occupy residues 17–37 (VLALGLAAFALLLLAIPISFW), 45–65 (SAVVTLLVALANLVLTAQLVL), 75–95 (ISNLYESLCFLAWACTLAQLL), 104–124 (IVSAAATPMALLCVAFASFAL), 149–169 (VIMCSYAALLVGSFLSMAVLF), 224–244 (TITVGFLLLTLGLISGAVWAN), 258–275 (TWALICWMVYAAYLHTRF), and 287–307 (VAVAGIVVIVVCYIGVNLLGI).

It belongs to the CcmF/CycK/Ccl1/NrfE/CcsA family. May interact with ccs1.

The protein resides in the cellular thylakoid membrane. Functionally, required during biogenesis of c-type cytochromes (cytochrome c6 and cytochrome f) at the step of heme attachment. This Prochlorococcus marinus (strain MIT 9303) protein is Cytochrome c biogenesis protein CcsA.